We begin with the raw amino-acid sequence, 215 residues long: Probable nicotinate-nucleotide adenylyltransferase (215 aa).

This sequence belongs to the NadD family.

The catalysed reaction is nicotinate beta-D-ribonucleotide + ATP + H(+) = deamido-NAD(+) + diphosphate. It functions in the pathway cofactor biosynthesis; NAD(+) biosynthesis; deamido-NAD(+) from nicotinate D-ribonucleotide: step 1/1. Its function is as follows. Catalyzes the reversible adenylation of nicotinate mononucleotide (NaMN) to nicotinic acid adenine dinucleotide (NaAD). The protein is Probable nicotinate-nucleotide adenylyltransferase of Coxiella burnetii (strain Dugway 5J108-111).